We begin with the raw amino-acid sequence, 733 residues long: Hexamerin (733 aa).

The first 17 residues, 1-17 (MKTALVLILATATLAVA), serve as a signal peptide directing secretion. Residues Asn199, Asn234, and Asn431 are each glycosylated (N-linked (GlcNAc...) asparagine).

The protein belongs to the hemocyanin family. As to quaternary structure, homohexamer.

The protein localises to the secreted. It is found in the extracellular space. Larval storage protein (LSP) which may serve as a store of amino acids for synthesis of adult proteins. In Blaberus discoidalis (Tropical cockroach), this protein is Hexamerin.